The sequence spans 544 residues: MAKDIKFSEEARRSMLRGVDTLANAVKVTLGPKGRNVVLEKKFGSPLITNDGVTIAKEIELEDAFENMGAKLVAEVASKTNDVAGDGTTTATVLAQAMIREGLKNVTAGANPMGLRKGIEKAVVAAVEELKTISKPIEGKSSIAQVAAISAADEEVGQLIAEAMERVGNDGVITLEESKGFTTELDVVEGMQFDRGYASPYMITDSDKMEAVLDNPYILITDKKISNIQEILPVLEQVVQQGKPLLIIAEDVEGEALATLVVNKLRGTFNVVAVKAPGFGDRRKAMLEDIAILTGGEVITEELGRDLKSATVESLGRAGKVVVTKENTTVVEGVGSTEQIEARIGQIRAQLEETTSEFDREKLQERLAKLVGGVAVIKVGAATETELKERKLRIEDALNSTRAAVEEGIVAGGGTSLMNVYTKVASIVAEGDEATGINIVLRALEEPVRQIAINAGLEGSVVVERLKGEKVGVGFNAATGEWVNMLETGIVDPAKVTRSALQNAASVAAMFLTTEAVVADKPEPNAPAMPDMGGMGMGGMGGMM.

ATP contacts are provided by residues 29-32 (TLGP), 86-90 (DGTTT), Gly413, 476-478 (NAA), and Asp492.

The protein belongs to the chaperonin (HSP60) family. Forms a cylinder of 14 subunits composed of two heptameric rings stacked back-to-back. Interacts with the co-chaperonin GroES.

The protein localises to the cytoplasm. It catalyses the reaction ATP + H2O + a folded polypeptide = ADP + phosphate + an unfolded polypeptide.. Together with its co-chaperonin GroES, plays an essential role in assisting protein folding. The GroEL-GroES system forms a nano-cage that allows encapsulation of the non-native substrate proteins and provides a physical environment optimized to promote and accelerate protein folding. This is Chaperonin GroEL from Bacillus anthracis (strain A0248).